The chain runs to 385 residues: Polyketide synthase 4 (385 aa).

Residue Cys157 is part of the active site.

The protein belongs to the thiolase-like superfamily. Chalcone/stilbene synthases family. As to expression, expressed in glandular trichomes.

The protein localises to the cytoplasm. In terms of biological role, polyketide synthase responsible for the biosynthesis of secondary metabolites. The polypeptide is Polyketide synthase 4 (PKSG4) (Cannabis sativa (Hemp)).